A 766-amino-acid chain; its full sequence is Dipeptidyl peptidase 4 (766 aa).

The Cytoplasmic segment spans residues 1-6; that stretch reads MKTPWK. A helical; Signal-anchor for type II membrane protein membrane pass occupies residues 7–28; that stretch reads VLLGLLGAAALVTIITVPVVLL. The Extracellular portion of the chain corresponds to 29–766; sequence NKGTDDATAD…HFIKQCFSLP (738 aa). 7 N-linked (GlcNAc...) asparagine glycosylation sites follow: N85, N92, N150, N219, N229, N281, and N321. 4 disulfide bridges follow: C328–C339, C385–C394, C444–C447, and C454–C472. The N-linked (GlcNAc...) asparagine glycan is linked to N520. The Charge relay system role is filled by S630. A disulfide bridge links C649 with C762. N-linked (GlcNAc...) asparagine glycosylation occurs at N685. Active-site charge relay system residues include D708 and H740.

The protein belongs to the peptidase S9B family. DPPIV subfamily. In terms of assembly, monomer. Homodimer. Heterodimer with Seprase (FAP). Requires homodimerization for optimal dipeptidyl peptidase activity and T-cell costimulation. Found in a membrane raft complex, at least composed of BCL10, CARD11, DPP4 and IKBKB. Associates with collagen. Interacts with PTPRC; the interaction is enhanced in an interleukin-12-dependent manner in activated lymphocytes. Interacts (via extracellular domain) with ADA; does not inhibit its dipeptidyl peptidase activity. Interacts with CAV1 (via the N-terminus); the interaction is direct. Interacts (via cytoplasmic tail) with CARD11 (via PDZ domain); its homodimerization is necessary for interaction with CARD11. Interacts with IGF2R; the interaction is direct. Interacts with GPC3. Interacts with human coronavirus-EMC spike protein and acts as a receptor for this virus. As to quaternary structure, (Microbial infection) Interacts with MERS coronavirus/MERS-CoV spike protein. The soluble form (Dipeptidyl peptidase 4 soluble form also named SDPP) derives from the membrane form (Dipeptidyl peptidase 4 membrane form also named MDPP) by proteolytic processing. Post-translationally, N- and O-Glycosylated. In terms of processing, phosphorylated. Mannose 6-phosphate residues in the carbohydrate moiety are necessary for interaction with IGF2R in activated T-cells. Mannose 6-phosphorylation is induced during T-cell activation. Expressed specifically in lymphatic vessels but not in blood vessels in the skin, small intestine, esophagus, ovary, breast and prostate glands. Not detected in lymphatic vessels in the lung, kidney, uterus, liver and stomach (at protein level). Expressed in the poorly differentiated crypt cells of the small intestine as well as in the mature villous cells. Expressed at very low levels in the colon.

The protein resides in the secreted. Its subcellular location is the cell membrane. The protein localises to the apical cell membrane. It localises to the cell projection. It is found in the invadopodium membrane. The protein resides in the lamellipodium membrane. Its subcellular location is the cell junction. The protein localises to the membrane raft. The catalysed reaction is Release of an N-terminal dipeptide, Xaa-Yaa-|-Zaa-, from a polypeptide, preferentially when Yaa is Pro, provided Zaa is neither Pro nor hydroxyproline.. Its activity is regulated as follows. Inhibited by GPC3 and diprotin A. In terms of biological role, cell surface glycoprotein receptor involved in the costimulatory signal essential for T-cell receptor (TCR)-mediated T-cell activation. Acts as a positive regulator of T-cell coactivation, by binding at least ADA, CAV1, IGF2R, and PTPRC. Its binding to CAV1 and CARD11 induces T-cell proliferation and NF-kappa-B activation in a T-cell receptor/CD3-dependent manner. Its interaction with ADA also regulates lymphocyte-epithelial cell adhesion. In association with FAP is involved in the pericellular proteolysis of the extracellular matrix (ECM), the migration and invasion of endothelial cells into the ECM. May be involved in the promotion of lymphatic endothelial cells adhesion, migration and tube formation. When overexpressed, enhanced cell proliferation, a process inhibited by GPC3. Also acts as a serine exopeptidase with a dipeptidyl peptidase activity that regulates various physiological processes by cleaving peptides in the circulation, including many chemokines, mitogenic growth factors, neuropeptides and peptide hormones such as brain natriuretic peptide 32. Removes N-terminal dipeptides sequentially from polypeptides having unsubstituted N-termini provided that the penultimate residue is proline. Its function is as follows. (Microbial infection) Acts as a receptor for human coronavirus MERS-CoV-2. This is Dipeptidyl peptidase 4 from Homo sapiens (Human).